We begin with the raw amino-acid sequence, 417 residues long: Carbon catabolite repressor protein 4 homolog 4 (417 aa).

Phe2 bears the N-acetylserine mark. Residue Glu143 participates in Mg(2+) binding.

This sequence belongs to the CCR4/nocturin family. Component of the CCR4-NOT complex, at least composed of CRR4 and CAF1 proteins. Forms homooligomers. Mg(2+) serves as cofactor.

It localises to the nucleus. The protein localises to the cytoplasm. The enzyme catalyses Exonucleolytic cleavage of poly(A) to 5'-AMP.. Its function is as follows. Acts as a catalytic component of the CCR4-NOT core complex, which in the nucleus seems to be a general transcription factor, and in the cytoplasm the major mRNA deadenylase involved in mRNA turnover. Transcriptional regulator of circadian rhythms with poly(A)-degrading activity that affects the expression and rhythmicity of the clock core oscillator genes TOC1 and CCA1. Deadenylation may be a mechanism involved in the regulation of the circadian clock. May play a negative role in response against oxidative stress. Possesses magnesium-dependent poly(A)-specific exoribonuclease activity in vitro and is almost inactive with poly(U), poly(C) and poly(G) as substrates. The polypeptide is Carbon catabolite repressor protein 4 homolog 4 (Arabidopsis thaliana (Mouse-ear cress)).